Reading from the N-terminus, the 594-residue chain is Arginine--tRNA ligase (594 aa).

The 'HIGH' region signature appears at 139-149 (ANPTGPLHVGH).

Belongs to the class-I aminoacyl-tRNA synthetase family. In terms of assembly, monomer.

The protein resides in the cytoplasm. The enzyme catalyses tRNA(Arg) + L-arginine + ATP = L-arginyl-tRNA(Arg) + AMP + diphosphate. The chain is Arginine--tRNA ligase from Burkholderia pseudomallei (strain 1106a).